A 432-amino-acid polypeptide reads, in one-letter code: Septin-11 (432 aa).

The residue at position 2 (Ala2) is an N-acetylalanine. Phosphoserine is present on Ser9. The Septin-type G domain occupies 38–304 (QGFCFNILCV…ELYRRCKLEE (267 aa)). Positions 48-55 (GETGIGKS) are G1 motif. GTP-binding positions include 48 to 55 (GETGIGKS), Gly103, 184 to 192 (KADTIAKNE), Gly238, and Arg253. The G3 motif stretch occupies residues 100–103 (DTVG). The tract at residues 183-186 (AKAD) is G4 motif. Residues 320–413 (QETYEAKRNE…LLQSQAQQSG (94 aa)) are a coiled coil. Residues 403-416 (QLLQSQAQQSGAQQ) show a composition bias toward low complexity. The disordered stretch occupies residues 403 to 432 (QLLQSQAQQSGAQQTKKDKDKKNSPWLCTE).

The protein belongs to the TRAFAC class TrmE-Era-EngA-EngB-Septin-like GTPase superfamily. Septin GTPase family. Septins polymerize into heterooligomeric protein complexes that form filaments, and can associate with cellular membranes, actin filaments and microtubules. Forms homooligomers. GTPase activity is required for filament formation. Interacts with SEPTIN7, SEPTIN9 and SEPTIN12.

Its subcellular location is the cytoplasm. The protein localises to the cytoskeleton. It localises to the synapse. It is found in the cell projection. The protein resides in the dendritic spine. Its subcellular location is the axon. Filament-forming cytoskeletal GTPase. May play a role in cytokinesis (Potential). May play a role in the cytoarchitecture of neurons, including dendritic arborization and dendritic spines, and in GABAergic synaptic connectivity. The sequence is that of Septin-11 from Macaca fascicularis (Crab-eating macaque).